The chain runs to 273 residues: HTH-type transcriptional activator RhaS (273 aa).

One can recognise an HTH araC/xylS-type domain in the interval 174–272 (YQLLDWLQNN…SQSPRDLRSQ (99 aa)). 2 DNA-binding regions (H-T-H motif) span residues 191 to 212 (PELADRFALPLRTLHRQLKNKT) and 239 to 262 (VTDIAYLCGFGDSNHFSTLFKREF).

As to quaternary structure, binds DNA as a dimer.

The protein localises to the cytoplasm. In terms of biological role, activates expression of the rhaBAD and rhaT operons. This is HTH-type transcriptional activator RhaS from Yersinia pestis bv. Antiqua (strain Angola).